Here is a 393-residue protein sequence, read N- to C-terminus: Digeranylgeranylglycerophospholipid reductase 2 (393 aa).

Positions 33, 44, 45, 47, 100, 124, 280, 292, and 293 each coordinate FAD.

It belongs to the geranylgeranyl reductase family. DGGGPL reductase subfamily. Requires FAD as cofactor.

It catalyses the reaction a 2,3-bis-O-phytanyl-sn-glycerol 1-phospholipid + 8 A = a 2,3-bis-O-(geranylgeranyl)-sn-glycerol 1-phospholipid + 8 AH2. The catalysed reaction is 2,3-bis-O-(phytanyl)-sn-glycerol 1-phosphate + 8 A = 2,3-bis-O-(geranylgeranyl)-sn-glycerol 1-phosphate + 8 AH2. The enzyme catalyses CDP-2,3-bis-O-(geranylgeranyl)-sn-glycerol + 8 AH2 = CDP-2,3-bis-O-(phytanyl)-sn-glycerol + 8 A. It carries out the reaction archaetidylserine + 8 AH2 = 2,3-bis-O-phytanyl-sn-glycero-3-phospho-L-serine + 8 A. Its pathway is membrane lipid metabolism; glycerophospholipid metabolism. In terms of biological role, is involved in the reduction of 2,3-digeranylgeranylglycerophospholipids (unsaturated archaeols) into 2,3-diphytanylglycerophospholipids (saturated archaeols) in the biosynthesis of archaeal membrane lipids. Catalyzes the formation of archaetidic acid (2,3-di-O-phytanyl-sn-glyceryl phosphate) from 2,3-di-O-geranylgeranylglyceryl phosphate (DGGGP) via the hydrogenation of each double bond of the isoprenoid chains. Is also probably able to reduce double bonds of geranyl groups in CDP-2,3-bis-O-(geranylgeranyl)-sn-glycerol and archaetidylserine, thus acting at various stages in the biosynthesis of archaeal membrane lipids. This chain is Digeranylgeranylglycerophospholipid reductase 2, found in Methanosphaera stadtmanae (strain ATCC 43021 / DSM 3091 / JCM 11832 / MCB-3).